We begin with the raw amino-acid sequence, 113 residues long: Iron-sulfur cluster insertion protein ErpA (113 aa).

Iron-sulfur cluster contacts are provided by C41, C105, and C107.

It belongs to the HesB/IscA family. In terms of assembly, homodimer. Requires iron-sulfur cluster as cofactor.

In terms of biological role, required for insertion of 4Fe-4S clusters for at least IspG. In Actinobacillus succinogenes (strain ATCC 55618 / DSM 22257 / CCUG 43843 / 130Z), this protein is Iron-sulfur cluster insertion protein ErpA.